Consider the following 383-residue polypeptide: MLQPQFRPLLAGTASFAQTVLGRTVARCYATKAATQSASSTSTSNTSKDAKAKIVTPYVRDAGMMRTYKPHTPGIRHLKRPINDHLWKGRPYLPLTFPKKGQSKGGRNHSGRVTVRHRGGGHKRRIRMVDFERWIPGPHTVLRIEYDPGRSAHIALVKEEATGRKSYIVAADGMRAGDVVQSYRSGLPQDLLDSMGGVVDPGILAARTCWRGNCLPVSMIPVGTQIYCVGSRPDGKAVFCRSAGTYATIISKEEETREDGTKVMTGKFVNVRLQSGEIRRVSKDACATVGIASNIMHHYRQLGKAGRSRWLNIRPTVRGLAMNANDHPHGGGRGKSKGNRHPVSPWGTPAKGGYKTRRKSNVNKWVVTPRVRNMGVRRNKKTT.

Disordered stretches follow at residues 97–122 and 322–357; these read FPKK…GGGH and MNAN…YKTR. Basic residues-rich tracts occupy residues 106-122 and 330-340; these read GRNH…GGGH and GGGRGKSKGNR.

This sequence belongs to the universal ribosomal protein uL2 family. In terms of assembly, component of the mitochondrial large ribosomal subunit (mt-LSU). Mature N.crassa 74S mitochondrial ribosomes consist of a small (37S) and a large (54S) subunit. The 37S small subunit contains a 16S ribosomal RNA (16S mt-rRNA) and 32 different proteins. The 54S large subunit contains a 23S rRNA (23S mt-rRNA) and 42 different proteins.

It is found in the mitochondrion. Its function is as follows. Component of the mitochondrial ribosome (mitoribosome), a dedicated translation machinery responsible for the synthesis of mitochondrial genome-encoded proteins, including at least some of the essential transmembrane subunits of the mitochondrial respiratory chain. The mitoribosomes are attached to the mitochondrial inner membrane and translation products are cotranslationally integrated into the membrane. This Neurospora crassa (strain ATCC 24698 / 74-OR23-1A / CBS 708.71 / DSM 1257 / FGSC 987) protein is Large ribosomal subunit protein uL2m (rml2).